A 218-amino-acid polypeptide reads, in one-letter code: Zinc metalloproteinase-disintegrin-like bothrojarin-2 (218 aa).

The Disintegrin domain occupies 14-100 (PPVCGNELLE…QCPTDDFHKN (87 aa)). Residues Val16, Leu21, Glu23, Glu26, and Asp29 each contribute to the Ca(2+) site. Intrachain disulfides connect Cys28–Cys46, Cys30–Cys41, Cys40–Cys63, Cys54–Cys60, Cys59–Cys85, Cys72–Cys92, Cys79–Cys111, Cys104–Cys116, Cys123–Cys173, and Cys151–Cys161. The D/ECD-tripeptide signature appears at 78–80 (ECD).

It belongs to the venom metalloproteinase (M12B) family. P-III subfamily. P-IIIa sub-subfamily. Monomer. Zn(2+) serves as cofactor. In terms of processing, glycosylated. As to expression, expressed by the venom gland.

It is found in the secreted. Its function is as follows. The hemorrhagic metalloproteinase-disintegrin-like bothrojarin-1 is a potent inhibitor of collagen-induced platelet aggregation by blockage of alpha-2/beta-1 (ITGA2/ITGB1) integrin. It does not present any fibrinogen-clotting activity. The protein is Zinc metalloproteinase-disintegrin-like bothrojarin-2 of Bothrops jararaca (Jararaca).